The following is a 297-amino-acid chain: Virulence genes transcriptional activator SpvR (297 aa).

The HTH lysR-type domain occupies 1–61 (MDFLINKKLK…IRKNGTLIPT (61 aa)). A DNA-binding region (H-T-H motif) is located at residues 21 to 40 (FSIATSVLYITRTPLSRVIS).

Belongs to the LysR transcriptional regulatory family.

Its subcellular location is the cytoplasm. Its function is as follows. Positive regulator for the plasmid-encoded virulence factors SpvA, SpvB, and SpvC. In Salmonella dublin, this protein is Virulence genes transcriptional activator SpvR (spvR).